The sequence spans 1194 residues: Chitin synthase C (1194 aa).

2 disordered regions span residues 1–91 (MSLP…PNYL) and 136–177 (GAHG…RRKA). Positions 12 to 23 (PRREETSAFREP) are enriched in basic and acidic residues. Residues 42 to 54 (PRHHRHHRSHSSR) are compositionally biased toward basic residues. 2 stretches are compositionally biased toward basic and acidic residues: residues 55–69 (HQHDIDEERAEEGGI) and 76–85 (VKPERGRMDP). Positions 150-164 (TRHRSKKRKGSRKIS) are enriched in basic residues. Residues 221-241 (IGLISIILMIAAFVGFLTFGF) traverse the membrane as a helical segment. N-linked (GlcNAc...) asparagine glycans are attached at residues N351 and N390. Residues 476–496 (YVSLIFILSIVIVKFAFALLF) traverse the membrane as a helical segment. N-linked (GlcNAc...) asparagine glycans are attached at residues N582, N608, N885, and N1014. Transmembrane regions (helical) follow at residues 1039–1059 (FVIFVELVGTVVLPAAISFTI), 1073–1093 (IIPLVLLALILGLPGVLVVVT), and 1097–1117 (LVYVLWMLVYLISLPIWNFVL).

This sequence belongs to the chitin synthase family. Class V subfamily.

The protein resides in the cell membrane. The catalysed reaction is [(1-&gt;4)-N-acetyl-beta-D-glucosaminyl](n) + UDP-N-acetyl-alpha-D-glucosamine = [(1-&gt;4)-N-acetyl-beta-D-glucosaminyl](n+1) + UDP + H(+). Polymerizes chitin, a structural polymer of the cell wall and septum, by transferring the sugar moiety of UDP-GlcNAc to the non-reducing end of the growing chitin polymer. Responsible for synthesis of 30-40% of the chitin in the cells. ChsA and chsD play redundant functions in conidia formation. The chitin synthesized by the chsD-encoded isozyme contributes to the rigidity of the walls of germinating conidia, of the subapical region of hyphae, and of conidiophore vesicles, but is not necessary for normal morphology of these cells. The sequence is that of Chitin synthase C from Emericella nidulans (strain FGSC A4 / ATCC 38163 / CBS 112.46 / NRRL 194 / M139) (Aspergillus nidulans).